The primary structure comprises 280 residues: uncharacterized protein (280 aa).

Disordered regions lie at residues 1–124 and 177–280; these read MPRD…QREA and LEEE…LSSK. Composition is skewed to basic residues over residues 16–36 and 48–83; these read SRRRKHSRSPVRQRHSRRSRR and YSRRKSRSISPRRHRSRSVTPKRRSPTPKRYKRQKS. Basic and acidic residues-rich tracts occupy residues 102–124 and 182–259; these read AKNRNGEKLKREEEERKRRQREA and EASL…ERLK.

This is an uncharacterized protein from Arabidopsis thaliana (Mouse-ear cress).